A 366-amino-acid chain; its full sequence is Cytochrome c mitochondrial import factor CYC2 (366 aa).

The N-terminal 50 residues, 1-50 (MLWKNYVLSSSRITRRLHKSPRKSSFSKNFFITGCLLTVGAVSSYLTYRY), are a transit peptide targeting the mitochondrion. The FAD-binding FR-type domain maps to 63-184 (SYFVKYKISH…RGPFIDYEFP (122 aa)).

The cofactor is FAD.

The protein localises to the mitochondrion inner membrane. Redox component that participates in c-type cytochrome biogenesis in the mitochondrial intermembrane space. May play a role in the reduction of heme prior to its ligation to apocytochrome c by cytochrome c heme lyase. Has oxidoreductase activity in vitro. This chain is Cytochrome c mitochondrial import factor CYC2 (CYC2), found in Saccharomyces cerevisiae (strain ATCC 204508 / S288c) (Baker's yeast).